Reading from the N-terminus, the 139-residue chain is Crossover junction endodeoxyribonuclease Hje (139 aa).

The Mg(2+) site is built by E10, D39, and E52.

The protein belongs to the Holliday junction resolvase Hjc family. Hje subfamily. Homodimer. The cofactor is Mg(2+).

It catalyses the reaction Endonucleolytic cleavage at a junction such as a reciprocal single-stranded crossover between two homologous DNA duplexes (Holliday junction).. Functionally, a structure-specific endonuclease that resolves Holliday junction (HJ) intermediates during genetic recombination. Acts only on 4-way DNA junctions in a sequence non-specific manner; introduces paired nicks in opposing strands 2 bases 3' of the point of strand exchange only on continuous strands of 4-way junction DNA. Cleaves both mobile and immobile junctions. In terms of biological role, redundant function with Holliday junction resolvase Hjc. The protein is Crossover junction endodeoxyribonuclease Hje of Sulfolobus acidocaldarius (strain ATCC 33909 / DSM 639 / JCM 8929 / NBRC 15157 / NCIMB 11770).